Consider the following 242-residue polypeptide: RxLR effector protein PexRD15 (242 aa).

The signal sequence occupies residues 1-24 (MMKSLYAVNLVLLLLLAFFAPAPA). A RxLR-dEER motif is present at residues 48-66 (RLLRAHSSDKEEQKEEEER).

This sequence belongs to the RxLR effector family.

It is found in the secreted. Its subcellular location is the host cell membrane. Its function is as follows. Effector that enhances P.infestans colonization of Nicotiana benthamiana leaves. This chain is RxLR effector protein PexRD15, found in Phytophthora infestans (strain T30-4) (Potato late blight agent).